The following is a 178-amino-acid chain: Large ribosomal subunit protein uL16 (178 aa).

This sequence belongs to the universal ribosomal protein uL16 family.

This Pyrobaculum calidifontis (strain DSM 21063 / JCM 11548 / VA1) protein is Large ribosomal subunit protein uL16.